Here is an 833-residue protein sequence, read N- to C-terminus: MVYYNHKAIENKWQKFWEDNHTFKTGTASSKPKFYALDMFPYPSGAGLHVGHPEGYTATDILSRFKRAQGYNVLHPMGWDAFGLPAEQYAMDTGHDPADFTAQNIATFKRQIKSLGFSYDWDREINTTDPNYYKWTQWIFTKLYEKGLAYEAEVPVNWVEELGTAIANEEVLPDGTSERGGYPVVRKPMRQWMLKITAYAERLLEDLEDLDWPESIKDMQRNWIGKSTGANVTFKVKDTDEEFTVFTTRPDTLFGATYAVLAPEHDLVDIITTAGQAQAVADYKHQASLKSDLARTDLAKEKTGVWTGAYAINPVNGKEIPIWIADYVLASYGTGAIMAVPAHDERDWEFAKQFNLDIIPVLEGGNVAEAAYTDDGLHINSGFLNGLDKAAAIDKMVTWLETEGVGNKKVTYRLRDWLFSRQRYWGEPIPIIHWEDGTSTALPENELPLVLPVTKDIKPSGTGESPLANLTDWLEVTREDGVKGRRETNTMPQWAGSSWYFLRYIDPHNDQKLADEDLLKQWLPVDVYVGGAEHAVLHLLYARFWHKFLYDLGVVPTKEPFQKLFNQGMILGTSYRDHRGALVATDKVEKRDGSFFNIETDEELEQAPAKMSKSLKNVVNPDDVVEQYGADTLRVYEMFMGPLDASIAWSEEGLEGSRKFLDRVYRLITTKEIAAKNNGHLDKVYNEVVKTVTEHLEAMRFNTAISQLMIFVNAANKEEQLFLDYAKGFIQLLAPFAPHLAEELWQFLTQSGQSITYVAWPSYDESKLVEDEIEIVLQIKGKVRAKVVVSKDSSREDLEKIALANDKIQAEVAGKDIVKVIAVPNKLVNIVIK.

The 'HIGH' region motif lies at 41-52 (PYPSGAGLHVGH). The 'KMSKS' region signature appears at 610-614 (KMSKS). Residue K613 participates in ATP binding.

The protein belongs to the class-I aminoacyl-tRNA synthetase family.

It localises to the cytoplasm. It carries out the reaction tRNA(Leu) + L-leucine + ATP = L-leucyl-tRNA(Leu) + AMP + diphosphate. This is Leucine--tRNA ligase from Streptococcus mutans serotype c (strain ATCC 700610 / UA159).